The chain runs to 199 residues: Casparian strip membrane protein 1 (199 aa).

The Cytoplasmic portion of the chain corresponds to 1–37; that stretch reads MKSESAAIDIPESSSVAKGKAPLIAVSRNEKGGYRKG. The chain crosses the membrane as a helical span at residues 38–58; that stretch reads IAIFDFILRLAAIATALAAAA. Over 59–87 the chain is Extracellular; it reads AMGTSDETLPFFTQFFQFQASYDDLPTFQ. A helical transmembrane segment spans residues 88–108; that stretch reads FFVIAIAIVGGYLVLSLPFSI. Topologically, residues 109–120 are cytoplasmic; that stretch reads VAIVRPHAVGPR. A helical transmembrane segment spans residues 121-141; the sequence is LLLIILDAVALTLNTAAGAAA. The Extracellular portion of the chain corresponds to 142–173; it reads AAIVYLAHNGNSNTNWLAICQQYGDFCQKVSG. The helical transmembrane segment at 174–194 threads the bilayer; the sequence is AVVASFITVVIFVFLIVLSAF. At 195–199 the chain is on the cytoplasmic side; it reads ALRRH.

This sequence belongs to the Casparian strip membrane proteins (CASP) family. Homodimer and heterodimers.

The protein resides in the cell membrane. Functionally, regulates membrane-cell wall junctions and localized cell wall deposition. Required for establishment of the Casparian strip membrane domain (CSD) and the subsequent formation of Casparian strips, a cell wall modification of the root endodermis that determines an apoplastic barrier between the intraorganismal apoplasm and the extraorganismal apoplasm and prevents lateral diffusion. This chain is Casparian strip membrane protein 1, found in Populus trichocarpa (Western balsam poplar).